A 163-amino-acid polypeptide reads, in one-letter code: MAETIEVLVAGGQADPGPPLGPELGPTPVDVQAVVQEINDQTEAFDGTEVPVTIEYEDDGSFSIEVGVPPTAALVKDEAGFDTGSGEPQENFVADLSIEQLKTIAEQKKPDLLAYDARNAAKEVAGTCASLGVTIEGEDARTFNERVDDGDYDDVLGDELAAA.

The interval 1 to 26 is disordered; that stretch reads MAETIEVLVAGGQADPGPPLGPELGP.

It belongs to the universal ribosomal protein uL11 family. In terms of assembly, part of the ribosomal stalk of the 50S ribosomal subunit. Interacts with L10 and the large rRNA to form the base of the stalk. L10 forms an elongated spine to which L12 dimers bind in a sequential fashion forming a multimeric L10(L12)X complex.

In terms of biological role, forms part of the ribosomal stalk which helps the ribosome interact with GTP-bound translation factors. This chain is Large ribosomal subunit protein uL11, found in Halobacterium salinarum (strain ATCC 29341 / DSM 671 / R1).